A 393-amino-acid chain; its full sequence is Tryptophan synthase beta chain (393 aa).

N6-(pyridoxal phosphate)lysine is present on lysine 85.

This sequence belongs to the TrpB family. In terms of assembly, tetramer of two alpha and two beta chains. It depends on pyridoxal 5'-phosphate as a cofactor.

It carries out the reaction (1S,2R)-1-C-(indol-3-yl)glycerol 3-phosphate + L-serine = D-glyceraldehyde 3-phosphate + L-tryptophan + H2O. The protein operates within amino-acid biosynthesis; L-tryptophan biosynthesis; L-tryptophan from chorismate: step 5/5. Functionally, the beta subunit is responsible for the synthesis of L-tryptophan from indole and L-serine. This is Tryptophan synthase beta chain (trpB) from Helicobacter pylori (strain ATCC 700392 / 26695) (Campylobacter pylori).